A 159-amino-acid chain; its full sequence is Calcium-binding protein CML39 (159 aa).

4 EF-hand domains span residues 18-53 (EKNR…LGEQ), 54-89 (MSDE…NDEF), 93-128 (EKKR…LGES), and 129-159 (RTTD…LMMR). Residues Asp-31, Asn-33, Asp-35, Arg-37, Glu-42, Asp-67, Asp-69, Asp-71, Met-73, and Glu-78 each contribute to the Ca(2+) site. Residues Asp-142, Asn-144, Asp-146, and Glu-153 each contribute to the Ca(2+) site.

In terms of tissue distribution, expressed in the zones of elongation and differentiation in seedling roots and at the root-hypocotyl junction. Expressed from stage 12 of flower development in anthers, specifically in pollen.

In terms of biological role, potential calcium sensor that binds calcium in vitro. The polypeptide is Calcium-binding protein CML39 (CML39) (Arabidopsis thaliana (Mouse-ear cress)).